We begin with the raw amino-acid sequence, 101 residues long: Small ribosomal subunit protein uS14 (101 aa).

Belongs to the universal ribosomal protein uS14 family. As to quaternary structure, part of the 30S ribosomal subunit. Contacts proteins S3 and S10.

Binds 16S rRNA, required for the assembly of 30S particles and may also be responsible for determining the conformation of the 16S rRNA at the A site. This Arthrobacter sp. (strain FB24) protein is Small ribosomal subunit protein uS14.